Reading from the N-terminus, the 663-residue chain is RING finger protein 145 (663 aa).

The next 14 helical transmembrane spans lie at 53–73 (YLAL…LTLP), 77–97 (LVQL…HQIS), 123–143 (FTTA…VMKT), 146–166 (IWLF…VPLE), 168–188 (IVII…YFLG), 205–222 (LVQV…MSLW), 225–245 (LVVP…QIYS), 275–295 (YSLL…LTLC), 316–336 (TEGV…LQVV), 340–360 (FLLS…MLEI), 384–404 (SLCL…CQFF), 410–430 (LLII…TLFI), 460–480 (LLEF…TIFG), and 482–502 (WTVM…WLRA). Positions 81 to 84 (YLYF) match the YLYF motif motif. Cys537 is an active-site residue. Residues 537 to 575 (CAICYQDMKSAVITPCSHFFHAGCLKKWLYVQDTCPLCH) form an RING-type; atypical zinc finger. The tract at residues 587–663 (LGTEAAPQPP…EGEVCPVESA (77 aa)) is disordered. The span at 619-628 (GTGTQEGSGD) shows a compositional bias: polar residues.

As to quaternary structure, interacts (via YLYF motif) with INSIG1 and INSIG2.

The protein localises to the endoplasmic reticulum membrane. It carries out the reaction S-ubiquitinyl-[E2 ubiquitin-conjugating enzyme]-L-cysteine + [acceptor protein]-L-lysine = [E2 ubiquitin-conjugating enzyme]-L-cysteine + N(6)-ubiquitinyl-[acceptor protein]-L-lysine.. Its function is as follows. E3 ubiquitin ligase that catalyzes the direct transfer of ubiquitin from E2 ubiquitin-conjugating enzyme to a specific substrate. In response to bacterial infection, negatively regulates the phagocyte oxidative burst by controlling the turnover of the NADPH oxidase complex subunits. Promotes monoubiquitination of CYBA and 'Lys-48'-linked polyubiquitination and degradation of CYBB NADPH oxidase catalytic subunits, both essential for the generation of antimicrobial reactive oxygen species. Involved in the maintenance of cholesterol homeostasis. In response to high sterol concentrations ubiquitinates HMGCR, a rate-limiting enzyme in cholesterol biosynthesis, and targets it for degradation. The interaction with INSIG1 is required for this function. In addition, triggers ubiquitination of SCAP, likely inhibiting its transport to the Golgi apparatus and the subsequent processing/maturation of SREBPF2, ultimately down-regulating cholesterol biosynthesis. The protein is RING finger protein 145 of Mus musculus (Mouse).